A 213-amino-acid chain; its full sequence is Histone H1.1 (213 aa).

The disordered stretch occupies residues 1 to 43 (MSETAPVAQAASTATEKPAAAKKTKKPAKAAAPRKKPAGPSVS). Position 2 is an N-acetylserine (serine 2). 2 positions are modified to phosphoserine: serine 2 and serine 12. Residues 8–18 (AQAASTATEKP) show a composition bias toward low complexity. At lysine 17 the chain carries N6-acetyllysine. Basic residues predominate over residues 20–37 (AAKKTKKPAKAAAPRKKP). Lysine 36 carries the N6-(beta-hydroxybutyryl)lysine modification. The region spanning 38–111 (AGPSVSELIV…GAAGSFKLNK (74 aa)) is the H15 domain. At serine 43 the chain carries Phosphoserine. At lysine 54 the chain carries N6-(beta-hydroxybutyryl)lysine. Arginine 56 is modified (citrulline). N6-(beta-hydroxybutyryl)lysine is present on lysine 66. Residue serine 67 is modified to Phosphoserine. N6-acetyllysine is present on lysine 77. N6-(beta-hydroxybutyryl)lysine is present on lysine 87. At lysine 92 the chain carries N6-(beta-hydroxybutyryl)lysine; alternate. Lysine 92 carries the N6-acetyllysine; alternate modification. Residue serine 106 is modified to Phosphoserine. The residue at position 108 (lysine 108) is an N6-(beta-hydroxybutyryl)lysine. The interval 112–213 (KAESKAITTK…KPKKAAPKKK (102 aa)) is disordered. Positions 120 to 144 (TKVSVKAKASGAAKKPKKTAGAAAK) are enriched in low complexity. Residue lysine 121 is modified to N6-acetyllysine. Basic residues-rich tracts occupy residues 145–178 (KTVK…KKVA) and 185–213 (KAVK…PKKK). Threonine 201 is subject to Phosphothreonine.

This sequence belongs to the histone H1/H5 family. Interacts with DFFB. In terms of processing, H1 histones are progressively phosphorylated during the cell cycle, becoming maximally phosphorylated during late G2 phase and M phase, and being dephosphorylated sharply thereafter. Citrullination at Arg-56 (H1R54ci) by PADI4 takes place within the DNA-binding site of H1 and results in its displacement from chromatin and global chromatin decondensation, thereby promoting pluripotency and stem cell maintenance. Post-translationally, hydroxybutyrylation of histones is induced by starvation. In terms of tissue distribution, restricted to thymus, testis and spleen. Present also in lymphocytic and neuronal cells. Increases in testis starting with a low level at day 5 and reaching high concentrations in 20-day old and adult animals.

The protein localises to the nucleus. The protein resides in the chromosome. Histone H1 protein binds to linker DNA between nucleosomes forming the macromolecular structure known as the chromatin fiber. Histones H1 are necessary for the condensation of nucleosome chains into higher-order structured fibers. Also acts as a regulator of individual gene transcription through chromatin remodeling, nucleosome spacing and DNA methylation. This Mus musculus (Mouse) protein is Histone H1.1.